The chain runs to 262 residues: tRNA pseudouridine synthase A (262 aa).

Asp51 acts as the Nucleophile in catalysis. Tyr109 serves as a coordination point for substrate.

The protein belongs to the tRNA pseudouridine synthase TruA family. In terms of assembly, homodimer.

The enzyme catalyses uridine(38/39/40) in tRNA = pseudouridine(38/39/40) in tRNA. Formation of pseudouridine at positions 38, 39 and 40 in the anticodon stem and loop of transfer RNAs. The sequence is that of tRNA pseudouridine synthase A from Legionella pneumophila (strain Lens).